The following is a 40-amino-acid chain: Photosystem II reaction center protein J (40 aa).

Residues 8–28 form a helical membrane-spanning segment; it reads IPLWLIGTVTGILVIGLIGVF.

This sequence belongs to the PsbJ family. PSII is composed of 1 copy each of membrane proteins PsbA, PsbB, PsbC, PsbD, PsbE, PsbF, PsbH, PsbI, PsbJ, PsbK, PsbL, PsbM, PsbT, PsbX, PsbY, PsbZ, Psb30/Ycf12, at least 3 peripheral proteins of the oxygen-evolving complex and a large number of cofactors. It forms dimeric complexes.

It is found in the plastid. The protein localises to the chloroplast thylakoid membrane. One of the components of the core complex of photosystem II (PSII). PSII is a light-driven water:plastoquinone oxidoreductase that uses light energy to abstract electrons from H(2)O, generating O(2) and a proton gradient subsequently used for ATP formation. It consists of a core antenna complex that captures photons, and an electron transfer chain that converts photonic excitation into a charge separation. The chain is Photosystem II reaction center protein J from Nymphaea alba (White water-lily).